A 236-amino-acid polypeptide reads, in one-letter code: 2-C-methyl-D-erythritol 4-phosphate cytidylyltransferase (236 aa).

This sequence belongs to the IspD/TarI cytidylyltransferase family. IspD subfamily.

It catalyses the reaction 2-C-methyl-D-erythritol 4-phosphate + CTP + H(+) = 4-CDP-2-C-methyl-D-erythritol + diphosphate. It functions in the pathway isoprenoid biosynthesis; isopentenyl diphosphate biosynthesis via DXP pathway; isopentenyl diphosphate from 1-deoxy-D-xylulose 5-phosphate: step 2/6. Catalyzes the formation of 4-diphosphocytidyl-2-C-methyl-D-erythritol from CTP and 2-C-methyl-D-erythritol 4-phosphate (MEP). The chain is 2-C-methyl-D-erythritol 4-phosphate cytidylyltransferase from Burkholderia multivorans (strain ATCC 17616 / 249).